The primary structure comprises 546 residues: MAAKDIRFGEDARTRMVRGVNVLANAVKATLGPKGRNVVLEKSFGAPTITKDGVSVAKEIELADKFENMGAQMVKEVASKTNDNAGDGTTTATVLAQALIREGAKAVAAGMNPMDLKRGIDQAVKAAVVELKNISKPTTDDKAIAQVGTISANSDESIGNIIAEAMKKVGKEGVITVEEGSGLENELDVVEGMQFDRGYLSPYFINNQQSQSADLDDPFILLHDKKISNVRDLLPVLEGVAKAGKPLLIVAEEVEGEALATLVVNTIRGIVKVVAVKAPGFGDRRKAMLEDMAVLTGGTVISEEVGLALEKATIKDLGRAKKVQVSKENTTIIDGAGDSAAIESRVGQIKTQIEDTSSDYDREKLQERVAKLAGGVAVIKVGASTEIEMKEKKARVEDALHATRAAVEEGVVPGGGVALVRALVAVGNLTGANEDQTHGIQIALRAMEAPLREIVANAGEEPSVILNKVKEGTGNYGYNAANGEFGDMVEFGILDPTKVTRSALQNAASIAGLMITTEAMVADAPKKDEPAMPAGGGMGGMGGMDF.

Residues 30 to 33 (TLGP), lysine 51, 87 to 91 (DGTTT), glycine 415, 479 to 481 (NAA), and aspartate 495 each bind ATP. The tract at residues 526–546 (KKDEPAMPAGGGMGGMGGMDF) is disordered. Gly residues predominate over residues 534 to 546 (AGGGMGGMGGMDF).

This sequence belongs to the chaperonin (HSP60) family. As to quaternary structure, forms a cylinder of 14 subunits composed of two heptameric rings stacked back-to-back. Interacts with the co-chaperonin GroES.

Its subcellular location is the cytoplasm. It carries out the reaction ATP + H2O + a folded polypeptide = ADP + phosphate + an unfolded polypeptide.. In terms of biological role, together with its co-chaperonin GroES, plays an essential role in assisting protein folding. The GroEL-GroES system forms a nano-cage that allows encapsulation of the non-native substrate proteins and provides a physical environment optimized to promote and accelerate protein folding. The chain is Chaperonin GroEL from Xanthomonas oryzae pv. oryzae (strain MAFF 311018).